The chain runs to 190 residues: Pyridoxamine 5'-phosphate oxidase C1952.08c homolog (190 aa).

FMN is bound by residues S62 and K69.

It belongs to the pyridoxamine 5'-phosphate oxidase family. FMN is required as a cofactor.

The protein resides in the cytoplasm. Its subcellular location is the nucleus. The polypeptide is Pyridoxamine 5'-phosphate oxidase C1952.08c homolog (Schizosaccharomyces pombe (strain 972 / ATCC 24843) (Fission yeast)).